A 219-amino-acid chain; its full sequence is VQ motif-containing protein 19 (219 aa).

Residues 47-56 (FKQVVQMLTG) carry the VQ motif. Residues 52–94 (QMLTGSSSPRSPDSPRPPTTPSGKGNFVIPPIKTAQPKKHSGN) are disordered. S59, S65, S127, S131, S139, S141, and S152 each carry phosphoserine. T155 is modified (phosphothreonine). 2 disordered regions span residues 156-177 (PLKQ…PLSE) and 190-219 (HRSP…SPEM). S192 and S195 each carry phosphoserine. T196 and T211 each carry phosphothreonine. 2 positions are modified to phosphoserine: S212 and S216.

In terms of processing, phosphorylated on serine and threonine residues by MPK6.

It localises to the nucleus. Functionally, may modulate WRKY transcription factor activities. The sequence is that of VQ motif-containing protein 19 from Arabidopsis thaliana (Mouse-ear cress).